The primary structure comprises 151 residues: UPF0208 membrane protein SG1605 (151 aa).

2 consecutive transmembrane segments (helical) span residues 46 to 64 (FGVR…WQIA) and 70 to 90 (GPAV…LWWL).

It belongs to the UPF0208 family.

Its subcellular location is the cell inner membrane. This is UPF0208 membrane protein SG1605 from Sodalis glossinidius (strain morsitans).